We begin with the raw amino-acid sequence, 260 residues long: UPF0246 protein Cbei_1739 (260 aa).

This sequence belongs to the UPF0246 family.

This Clostridium beijerinckii (strain ATCC 51743 / NCIMB 8052) (Clostridium acetobutylicum) protein is UPF0246 protein Cbei_1739.